Reading from the N-terminus, the 503-residue chain is Lysine--tRNA ligase (503 aa).

Mg(2+)-binding residues include E414 and E421.

Belongs to the class-II aminoacyl-tRNA synthetase family. As to quaternary structure, homodimer. Mg(2+) serves as cofactor.

The protein resides in the cytoplasm. It catalyses the reaction tRNA(Lys) + L-lysine + ATP = L-lysyl-tRNA(Lys) + AMP + diphosphate. The polypeptide is Lysine--tRNA ligase (Neisseria meningitidis serogroup B (strain ATCC BAA-335 / MC58)).